The primary structure comprises 356 residues: Probable arabinogalactan endo-beta-1,4-galactanase A (356 aa).

A signal peptide spans 1–21; the sequence is MLGKTVLLPLLVLLCHSLASA. Asn133 is a glycosylation site (N-linked (GlcNAc...) asparagine). The active-site Proton donor is Glu157. The active-site Nucleophile is Glu268.

The protein belongs to the glycosyl hydrolase 53 family.

Its subcellular location is the secreted. The catalysed reaction is The enzyme specifically hydrolyzes (1-&gt;4)-beta-D-galactosidic linkages in type I arabinogalactans.. Functionally, endogalactanase involved in the degradation of plant cell wall polysaccharides, and more particularly of hairy regions of pectin. This chain is Probable arabinogalactan endo-beta-1,4-galactanase A (galA), found in Aspergillus fumigatus (strain ATCC MYA-4609 / CBS 101355 / FGSC A1100 / Af293) (Neosartorya fumigata).